A 458-amino-acid polypeptide reads, in one-letter code: MTRDVRQLFGTDGVRGRANFEPMTVETSVLLGKAIAGVLLEKHAGKHRVVVGKDTRLSGYMFENALIAGLTSMGIETLMLGPIPTPGVAFITRAYRADAGIMISASHNPYRDNGIKIFSSDGFKIGQAVEERIEAMVASKDFGKLPDDHAVGKNKRVKDATGRYIEYAKATFPKGRTLKGLRIVLDCAHGATYRVAPSVFEELDAEVICYGCEPSGCNINAGCGALWPSTIQKAVIEHKADVGIALDGDGDRLIMVDEKGHIVDGDMLLSICASDLKRRQALSDNRVVATVMTNFGVLRYLESLGIQVTISPVGDRHVLQHMLENQAVLGGEQSGHMIFLDYNTTGDGIVSALQVLRIMIESESTLSDLTACIAKSPQALINVPVTKKVPLESLANVQGVLKEVKEVLGDSGRILLRYSGTENICRVMVEGTKKHQVDSLAKTIVDVVEAEIGAEISE.

S106 serves as the catalytic Phosphoserine intermediate. Residues S106, D247, D249, and D251 each contribute to the Mg(2+) site. At S106 the chain carries Phosphoserine.

It belongs to the phosphohexose mutase family. Requires Mg(2+) as cofactor. Post-translationally, activated by phosphorylation.

It catalyses the reaction alpha-D-glucosamine 1-phosphate = D-glucosamine 6-phosphate. Its function is as follows. Catalyzes the conversion of glucosamine-6-phosphate to glucosamine-1-phosphate. The sequence is that of Phosphoglucosamine mutase from Chlamydia trachomatis serovar D (strain ATCC VR-885 / DSM 19411 / UW-3/Cx).